The sequence spans 1131 residues: Probable secreted beta-glucosidase adg3 (1131 aa).

An N-terminal signal peptide occupies residues 1–23 (MPSKIEKICLLLLGFTAASNVNA). Residues N58, N123, N252, N551, N593, N631, and N689 are each glycosylated (N-linked (GlcNAc...) asparagine). A disordered region spans residues 609–819 (GTTSSTSEIV…SSPISSNSVT (211 aa)). Positions 623–715 (SNSNTGSLNG…YSDPTTTITS (93 aa)) are enriched in low complexity. Over residues 716–725 (EVSSILSSPT) the composition is skewed to polar residues. Low complexity predominate over residues 726-737 (SMQSSVSRPQSS). Over residues 738 to 763 (GDASGFNTIFTSISQSSDGETSGYTI) the composition is skewed to polar residues. Composition is skewed to low complexity over residues 764–773 (SSNSSQNSAS) and 780–819 (TSSS…NSVT). N-linked (GlcNAc...) asparagine glycans are attached at residues N766, N806, and N857. Residues 893 to 909 (STSNSGSTSYSIPSSSS) show a composition bias toward low complexity. The disordered stretch occupies residues 893-918 (STSNSGSTSYSIPSSSSRNEGTTSYS). A glycan (N-linked (GlcNAc...) asparagine) is linked at N920. A compositionally biased stretch (low complexity) spans 977-1027 (LTVKPESSLSSSTTSGLTSSSSTIPSSTRSESNSESASTSSASKRSSSSTS). The tract at residues 977–1031 (LTVKPESSLSSSTTSGLTSSSSTIPSSTRSESNSESASTSSASKRSSSSTSLVQS) is disordered.

It belongs to the SUN family.

The protein localises to the secreted. In terms of biological role, cell surface beta-glucosidase involved in cell wall biogenesis,. The protein is Probable secreted beta-glucosidase adg3 (adg3) of Schizosaccharomyces pombe (strain 972 / ATCC 24843) (Fission yeast).